Consider the following 241-residue polypeptide: Large ribosomal subunit protein uL1 (241 aa).

This sequence belongs to the universal ribosomal protein uL1 family. Part of the 50S ribosomal subunit.

In terms of biological role, binds directly to 23S rRNA. The L1 stalk is quite mobile in the ribosome, and is involved in E site tRNA release. Functionally, protein L1 is also a translational repressor protein, it controls the translation of the L11 operon by binding to its mRNA. The polypeptide is Large ribosomal subunit protein uL1 (Streptomyces coelicolor (strain ATCC BAA-471 / A3(2) / M145)).